A 405-amino-acid polypeptide reads, in one-letter code: Elongation factor Tu (405 aa).

Residues 10-215 (KPHVNVGTIG…AIDAYIPTPE (206 aa)) enclose the tr-type G domain. Positions 19–26 (GHVDHGKT) are G1. A GTP-binding site is contributed by 19-26 (GHVDHGKT). T26 is a Mg(2+) binding site. Positions 61-65 (GITIN) are G2. The tract at residues 82 to 85 (DCPG) is G3. Residues 82–86 (DCPGH) and 137–140 (NKVD) contribute to the GTP site. Residues 137–140 (NKVD) form a G4 region. Residues 175 to 177 (SAL) are G5.

This sequence belongs to the TRAFAC class translation factor GTPase superfamily. Classic translation factor GTPase family. EF-Tu/EF-1A subfamily. Monomer.

It is found in the cytoplasm. It catalyses the reaction GTP + H2O = GDP + phosphate + H(+). Functionally, GTP hydrolase that promotes the GTP-dependent binding of aminoacyl-tRNA to the A-site of ribosomes during protein biosynthesis. This Deinococcus geothermalis (strain DSM 11300 / CIP 105573 / AG-3a) protein is Elongation factor Tu.